The sequence spans 400 residues: Serine/threonine transporter SstT (400 aa).

9 helical membrane-spanning segments follow: residues 14–34, 48–68, 76–96, 136–156, 177–197, 211–231, 285–305, 311–331, and 349–371; these read IIIA…VTPY, SVAP…FQVG, VLLL…IASL, AISE…GLAM, IIHK…AVTF, LLAV…PILV, IPLG…VLTL, LGIH…TISA, and CSLF…IISV.

It belongs to the dicarboxylate/amino acid:cation symporter (DAACS) (TC 2.A.23) family.

The protein localises to the cell inner membrane. The enzyme catalyses L-serine(in) + Na(+)(in) = L-serine(out) + Na(+)(out). The catalysed reaction is L-threonine(in) + Na(+)(in) = L-threonine(out) + Na(+)(out). In terms of biological role, involved in the import of serine and threonine into the cell, with the concomitant import of sodium (symport system). This chain is Serine/threonine transporter SstT, found in Acinetobacter baumannii (strain ATCC 17978 / DSM 105126 / CIP 53.77 / LMG 1025 / NCDC KC755 / 5377).